We begin with the raw amino-acid sequence, 232 residues long: Thrombin-like enzyme bothrombin (232 aa).

Residues 1-223 enclose the Peptidase S1 domain; the sequence is VIGGDECDIN…YLPWIQSIIA (223 aa). 6 disulfide bridges follow: cysteine 7/cysteine 139, cysteine 26/cysteine 42, cysteine 74/cysteine 230, cysteine 118/cysteine 184, cysteine 150/cysteine 163, and cysteine 174/cysteine 199. Residues histidine 41 and aspartate 86 each act as charge relay system in the active site. 2 N-linked (GlcNAc...) asparagine glycosylation sites follow: asparagine 98 and asparagine 146. The active-site Charge relay system is serine 178. Asparagine 225 carries an N-linked (GlcNAc...) asparagine glycan.

The protein belongs to the peptidase S1 family. Snake venom subfamily. As to quaternary structure, monomer. Expressed by the venom gland.

It localises to the secreted. The enzyme catalyses Selective cleavage of Arg-|-Xaa bond in fibrinogen, to form fibrin, and release fibrinopeptide A. The specificity of further degradation of fibrinogen varies with species origin of the enzyme.. Its activity is regulated as follows. Inhibited by diisopropylfluorophosphate (DFP), but not by hirudin. Functionally, thrombin-like snake venom serine protease that clots fibrinogen by releasing fibrinopeptide A from the alpha chain of fibrinogen (FGA), induces platelet aggregation through its interaction with GPIb (GP1BA/GP1BB), and activates factor VIII (F8). The protein is Thrombin-like enzyme bothrombin of Bothrops jararaca (Jararaca).